Consider the following 1122-residue polypeptide: DNA polymerase (1122 aa).

Belongs to the DNA polymerase type-B family. Heterodimer with the terminal protein; this heterodimer binds to bp 9 to 18 of the genome. Forms a complex with viral pTP, DBP and hosts NFIA and POU2F1/OCT1 for initiation of replication.

It is found in the host nucleus. The catalysed reaction is DNA(n) + a 2'-deoxyribonucleoside 5'-triphosphate = DNA(n+1) + diphosphate. Its function is as follows. Eukaryotic-type DNA polymerase involved in viral genomic replication. DNA synthesis is protein primed, and acts in a strand displacement replication. Assembles in complex with viral pTP, DBP, host NFIA and host POU2F1/OCT1 on viral origin of replication. The polymerase covalently transfers dCMP onto pTP, thereby initiating complementary strand synthesis. This is DNA polymerase from Human adenovirus B serotype 7 (HAdV-7).